The primary structure comprises 466 residues: Ribulose bisphosphate carboxylase large chain (466 aa).

Position 5 is an N6,N6,N6-trimethyllysine (lysine 5). Positions 114 and 164 each coordinate substrate. The active-site Proton acceptor is lysine 166. Lysine 168 lines the substrate pocket. The Mg(2+) site is built by lysine 192, aspartate 194, and glutamate 195. An N6-carboxylysine modification is found at lysine 192. The active-site Proton acceptor is histidine 285. The substrate site is built by arginine 286, histidine 318, and serine 370.

Belongs to the RuBisCO large chain family. Type I subfamily. In terms of assembly, heterohexadecamer of 8 large chains and 8 small chains; disulfide-linked. The disulfide link is formed within the large subunit homodimers. Requires Mg(2+) as cofactor. In terms of processing, the disulfide bond which can form in the large chain dimeric partners within the hexadecamer appears to be associated with oxidative stress and protein turnover.

It is found in the plastid. Its subcellular location is the chloroplast. The enzyme catalyses 2 (2R)-3-phosphoglycerate + 2 H(+) = D-ribulose 1,5-bisphosphate + CO2 + H2O. The catalysed reaction is D-ribulose 1,5-bisphosphate + O2 = 2-phosphoglycolate + (2R)-3-phosphoglycerate + 2 H(+). Functionally, ruBisCO catalyzes two reactions: the carboxylation of D-ribulose 1,5-bisphosphate, the primary event in carbon dioxide fixation, as well as the oxidative fragmentation of the pentose substrate in the photorespiration process. Both reactions occur simultaneously and in competition at the same active site. The polypeptide is Ribulose bisphosphate carboxylase large chain (Hedera helix (English ivy)).